The primary structure comprises 208 residues: Probable hydrolase YcaC (208 aa).

Residue Cys118 is part of the active site.

As to quaternary structure, homooctamer composed of two tetrameric rings.

The sequence is that of Probable hydrolase YcaC (ycaC) from Escherichia coli (strain K12).